A 257-amino-acid chain; its full sequence is Transcriptional regulatory protein TrcR (257 aa).

Residues arginine 33–leucine 147 form the Response regulatory domain. Position 82 is a 4-aspartylphosphate (aspartate 82). Residues aspartate 158–proline 255 constitute a DNA-binding region (ompR/PhoB-type).

Phosphorylated by TrcS.

Functionally, member of the two-component regulatory system TrcS/TrcR. Activates its own expression by binding specifically to the AT-rich sequence of the trcR promoter region. Also negatively regulates the expression of Rv1057 by binding to an AT-rich sequences within the Rv1057 upstream sequence. The TrcR-TrcS regulatory system may act as a transition regulatory system involved in adapting to an intracellular environment and transitioning from latency to reactivation. This Mycobacterium tuberculosis (strain ATCC 25618 / H37Rv) protein is Transcriptional regulatory protein TrcR.